Reading from the N-terminus, the 355-residue chain is S-adenosylmethionine:tRNA ribosyltransferase-isomerase (355 aa).

This sequence belongs to the QueA family. Monomer.

Its subcellular location is the cytoplasm. It carries out the reaction 7-aminomethyl-7-carbaguanosine(34) in tRNA + S-adenosyl-L-methionine = epoxyqueuosine(34) in tRNA + adenine + L-methionine + 2 H(+). Its pathway is tRNA modification; tRNA-queuosine biosynthesis. Functionally, transfers and isomerizes the ribose moiety from AdoMet to the 7-aminomethyl group of 7-deazaguanine (preQ1-tRNA) to give epoxyqueuosine (oQ-tRNA). This Burkholderia cenocepacia (strain ATCC BAA-245 / DSM 16553 / LMG 16656 / NCTC 13227 / J2315 / CF5610) (Burkholderia cepacia (strain J2315)) protein is S-adenosylmethionine:tRNA ribosyltransferase-isomerase.